The primary structure comprises 183 residues: Archaemetzincin (183 aa).

Position 131 (His131) interacts with Zn(2+). The active-site Proton acceptor is Glu132. His135, His141, Cys142, Cys147, and Cys166 together coordinate Zn(2+).

The protein belongs to the peptidase M54 family. As to quaternary structure, monomer. Zn(2+) serves as cofactor.

Probable zinc metalloprotease whose natural substrate is unknown. The protein is Archaemetzincin of Saccharolobus solfataricus (strain ATCC 35092 / DSM 1617 / JCM 11322 / P2) (Sulfolobus solfataricus).